Reading from the N-terminus, the 255-residue chain is Type III pantothenate kinase (255 aa).

Residue 6–13 (DVGNTNTV) participates in ATP binding. Residues Tyr100 and 107–110 (GADR) contribute to the substrate site. Asp109 acts as the Proton acceptor in catalysis. Asp129 contacts K(+). Residue Thr132 coordinates ATP. Thr184 serves as a coordination point for substrate.

This sequence belongs to the type III pantothenate kinase family. In terms of assembly, homodimer. NH4(+) serves as cofactor. The cofactor is K(+).

The protein localises to the cytoplasm. The enzyme catalyses (R)-pantothenate + ATP = (R)-4'-phosphopantothenate + ADP + H(+). Its pathway is cofactor biosynthesis; coenzyme A biosynthesis; CoA from (R)-pantothenate: step 1/5. Functionally, catalyzes the phosphorylation of pantothenate (Pan), the first step in CoA biosynthesis. This Syntrophotalea carbinolica (strain DSM 2380 / NBRC 103641 / GraBd1) (Pelobacter carbinolicus) protein is Type III pantothenate kinase.